A 453-amino-acid polypeptide reads, in one-letter code: UPF0210 protein Mbur_0828 (453 aa).

This sequence belongs to the UPF0210 family.

The protein is UPF0210 protein Mbur_0828 of Methanococcoides burtonii (strain DSM 6242 / NBRC 107633 / OCM 468 / ACE-M).